A 699-amino-acid polypeptide reads, in one-letter code: MTAIRGGSRRAPGLALALLGGVLLGACHGDENAQVNALPGFVSGSVRKTAYDGASDDLLTAGLGKTGLGSDTRPGFANPAQPSAAELRRLAIYSNYRALVDITPNGGYGRFWGPNVDLAGNDTLGEGKIAGTEYLAYSDDGSGRKNVTLLVQVPASFDPANPCIVTATASGSRGVYGAIAAAGEWGLKRGCAVAYNDKGGGNGAHEIGTGVVTLIDGTLATASSAGSSSLFTASESSSTLAAFNSAFPNRYAYKHAHSQQNPEQDWGLVTLQAVEFAYWALNEQFGPVVDGTRHGIRYRPGDITTIAASVSNGGGSALAAAEQDTRGWITAVVVGEPQINVRMTPGVTVEQGGAPVPSFGRPLADYATLANLLQPCAAAAVAATGAPYLSALPMGVTQSIRTQRCATLAAAGLVSGADTASQASDALAQLYAAGYLADSDLLQAPMWDSQAMPAIAVTYANAYTRSRVTDNLCNFSFATTNPVTGAVAAPAVSPMTNLFGAGNGVPPTNGINLVFNGASGGVDHRLATPDASFAGAFCLRQLWTANQLGIGTNVDAVRVAANLQHKPAIIVHGRSDALVPVNHASRAYVAQNSATEGRASQLSFYEVTNGQHFDAFLSVPGFDTRFVPVHYYDEQALNLMWNHLKSGAPLPPSQVIRTVPRGGVPGAAPALSTANLPPIVQSPGANAIAVNAGVIDVPL.

The first 33 residues, 1-33 (MTAIRGGSRRAPGLALALLGGVLLGACHGDENA), serve as a signal peptide directing secretion. S311 acts as the Charge relay system in catalysis.

The protein belongs to the D-(-)-3-hydroxybutyrate oligomer hydrolase family.

The protein resides in the secreted. It carries out the reaction (3R)-hydroxybutanoate dimer + H2O = 2 (R)-3-hydroxybutanoate + H(+). Its pathway is lipid metabolism; butanoate metabolism. Its function is as follows. Participates in the degradation of poly-3-hydroxybutyrate (PHB). It works downstream of poly(3-hydroxybutyrate) depolymerase, hydrolyzing D(-)-3-hydroxybutyrate oligomers of various length (3HB-oligomers) into 3HB-monomers. In Burkholderia mallei (strain NCTC 10247), this protein is D-(-)-3-hydroxybutyrate oligomer hydrolase.